A 284-amino-acid polypeptide reads, in one-letter code: RNase adapter protein RapZ (284 aa).

8-15 (GRSGSGKS) provides a ligand contact to ATP. Residue 56–59 (DVRN) coordinates GTP. Residues 266–284 (RARGKNVQSRHRTLEKRKQ) form an RNA-binding region.

This sequence belongs to the RapZ-like family. RapZ subfamily. In terms of assembly, homotrimer.

Its function is as follows. Modulates the synthesis of GlmS, by affecting the processing and stability of the regulatory small RNA GlmZ. When glucosamine-6-phosphate (GlcN6P) concentrations are high in the cell, RapZ binds GlmZ and targets it to cleavage by RNase E. Consequently, GlmZ is inactivated and unable to activate GlmS synthesis. Under low GlcN6P concentrations, RapZ is sequestered and inactivated by an other regulatory small RNA, GlmY, preventing GlmZ degradation and leading to synthesis of GlmS. The polypeptide is RNase adapter protein RapZ (Yersinia pseudotuberculosis serotype O:1b (strain IP 31758)).